The following is a 364-amino-acid chain: tRNA 2-selenouridine synthase (364 aa).

A Rhodanese domain is found at 14 to 137 (LLADTPLIDV…LRQTAIQATW (124 aa)). Residue Cys-97 is the S-selanylcysteine intermediate of the active site.

This sequence belongs to the SelU family. Monomer.

The enzyme catalyses 5-methylaminomethyl-2-thiouridine(34) in tRNA + selenophosphate + (2E)-geranyl diphosphate + H2O + H(+) = 5-methylaminomethyl-2-selenouridine(34) in tRNA + (2E)-thiogeraniol + phosphate + diphosphate. It catalyses the reaction 5-methylaminomethyl-2-thiouridine(34) in tRNA + (2E)-geranyl diphosphate = 5-methylaminomethyl-S-(2E)-geranyl-thiouridine(34) in tRNA + diphosphate. The catalysed reaction is 5-methylaminomethyl-S-(2E)-geranyl-thiouridine(34) in tRNA + selenophosphate + H(+) = 5-methylaminomethyl-2-(Se-phospho)selenouridine(34) in tRNA + (2E)-thiogeraniol. It carries out the reaction 5-methylaminomethyl-2-(Se-phospho)selenouridine(34) in tRNA + H2O = 5-methylaminomethyl-2-selenouridine(34) in tRNA + phosphate. Its function is as follows. Involved in the post-transcriptional modification of the uridine at the wobble position (U34) of tRNA(Lys), tRNA(Glu) and tRNA(Gln). Catalyzes the conversion of 2-thiouridine (S2U-RNA) to 2-selenouridine (Se2U-RNA). Acts in a two-step process involving geranylation of 2-thiouridine (S2U) to S-geranyl-2-thiouridine (geS2U) and subsequent selenation of the latter derivative to 2-selenouridine (Se2U) in the tRNA chain. The polypeptide is tRNA 2-selenouridine synthase (Salmonella typhi).